The primary structure comprises 226 residues: Glutathione peroxidase 3 (226 aa).

The first 24 residues, 1–24, serve as a signal peptide directing secretion; that stretch reads MARILRASCLLSLLLAGFVPPGRG. Selenocysteine 73 is a catalytic residue. A non-standard amino acid (selenocysteine) is located at residue selenocysteine 73.

Belongs to the glutathione peroxidase family. As to quaternary structure, homotetramer. Secreted in plasma.

The protein resides in the secreted. It catalyses the reaction 2 glutathione + H2O2 = glutathione disulfide + 2 H2O. It carries out the reaction tert-butyl hydroperoxide + 2 glutathione = tert-butanol + glutathione disulfide + H2O. In terms of biological role, protects cells and enzymes from oxidative damage, by catalyzing the reduction of hydrogen peroxide, lipid peroxides and organic hydroperoxide, by glutathione. The chain is Glutathione peroxidase 3 from Rattus norvegicus (Rat).